The following is a 202-amino-acid chain: Transcription factor MUTE (202 aa).

A bHLH domain is found at 1–49 (MSHIAVERNRRRQMNEHLKSLRSLTPCFYIKRGDQASIIGGVIEFIKEL).

In terms of assembly, homodimer. Leaf epidermis and flowers.

The protein resides in the nucleus. Its function is as follows. Transcription factor. Together with FMA and SPCH, regulates the stomata formation. Required for the differentiation of stomatal guard cells, by promoting successive asymmetric cell divisions and the formation of guard mother cells. Promotes the conversion of the leaf epidermis into stomata. The chain is Transcription factor MUTE (MUTE) from Arabidopsis thaliana (Mouse-ear cress).